The chain runs to 174 residues: Adenine phosphoribosyltransferase (174 aa).

It belongs to the purine/pyrimidine phosphoribosyltransferase family. Homodimer.

Its subcellular location is the cytoplasm. It catalyses the reaction AMP + diphosphate = 5-phospho-alpha-D-ribose 1-diphosphate + adenine. The protein operates within purine metabolism; AMP biosynthesis via salvage pathway; AMP from adenine: step 1/1. In terms of biological role, catalyzes a salvage reaction resulting in the formation of AMP, that is energically less costly than de novo synthesis. This Mycolicibacterium vanbaalenii (strain DSM 7251 / JCM 13017 / BCRC 16820 / KCTC 9966 / NRRL B-24157 / PYR-1) (Mycobacterium vanbaalenii) protein is Adenine phosphoribosyltransferase.